A 448-amino-acid polypeptide reads, in one-letter code: Late embryogenesis abundant protein ECP63 (448 aa).

Composition is skewed to basic and acidic residues over residues 282–326 and 334–354; these read TEEA…EEAG and QKTR…KDSA. Disordered stretches follow at residues 282–360 and 411–448; these read TEEA…RGNE and SKPG…KGKL. Positions 297-331 form a coiled coil; sequence KENMEKAGEVTRQKMEEMRLEGKELKEEAGAKAQE. Over residues 420–432 the composition is skewed to polar residues; it reads LKASDQMTGQTFN. The span at 435–448 shows a compositional bias: basic and acidic residues; it reads GRMDDDARKDKGKL.

Belongs to the LEA type 4 family. As to expression, expressed in mature seeds.

Functionally, may be involved in the BHLH109-mediated regulation of somatic embryogenesis. This Arabidopsis thaliana (Mouse-ear cress) protein is Late embryogenesis abundant protein ECP63.